The chain runs to 120 residues: Myohemerythrin (120 aa).

Residues histidine 26, histidine 56, glutamate 60, histidine 75, histidine 79, histidine 108, and aspartate 113 each coordinate Fe cation.

This sequence belongs to the hemerythrin family.

In terms of biological role, myohemerythrin is an oxygen-binding protein found in the retractor muscles of certain worms. The oxygen-binding site contains two iron atoms. The sequence is that of Myohemerythrin from Sipunculus nudus (Sipunculan worm).